A 134-amino-acid chain; its full sequence is ATP synthase epsilon chain, chloroplastic (134 aa).

Belongs to the ATPase epsilon chain family. In terms of assembly, F-type ATPases have 2 components, CF(1) - the catalytic core - and CF(0) - the membrane proton channel. CF(1) has five subunits: alpha(3), beta(3), gamma(1), delta(1), epsilon(1). CF(0) has three main subunits: a, b and c.

Its subcellular location is the plastid. It localises to the chloroplast thylakoid membrane. In terms of biological role, produces ATP from ADP in the presence of a proton gradient across the membrane. This is ATP synthase epsilon chain, chloroplastic from Liriodendron tulipifera (Tuliptree).